A 563-amino-acid polypeptide reads, in one-letter code: Eukaryotic translation initiation factor 3 subunit D-1 (563 aa).

The interval Val98–Ser167 is disordered. A compositionally biased stretch (basic residues) spans Lys100 to Asn121. Thr128 carries the phosphothreonine modification. The interval Glu291–Pro305 is RNA gate.

It belongs to the eIF-3 subunit D family. Component of the eukaryotic translation initiation factor 3 (eIF-3) complex. The eIF-3 complex interacts with pix.

The protein localises to the cytoplasm. MRNA cap-binding component of the eukaryotic translation initiation factor 3 (eIF-3) complex, which is involved in protein synthesis of a specialized repertoire of mRNAs and, together with other initiation factors, stimulates binding of mRNA and methionyl-tRNAi to the 40S ribosome. The eIF-3 complex specifically targets and initiates translation of a subset of mRNAs involved in cell proliferation. In the eIF-3 complex, eif3d specifically recognizes and binds the 7-methylguanosine cap of a subset of mRNAs. The sequence is that of Eukaryotic translation initiation factor 3 subunit D-1 from Drosophila virilis (Fruit fly).